The chain runs to 248 residues: TPR repeat-containing protein slr0751 (248 aa).

4 TPR repeats span residues 61 to 94, 95 to 128, 129 to 162, and 163 to 196; these read PEAI…SPDS, PETH…DRYY, IPPY…DPNR, and YKAY…RPDY.

The sequence is that of TPR repeat-containing protein slr0751 from Synechocystis sp. (strain ATCC 27184 / PCC 6803 / Kazusa).